Reading from the N-terminus, the 294-residue chain is FAD-dependent monooxygenase SAT1 (294 aa).

Aspartate 108 serves as a coordination point for FAD.

It belongs to the paxM FAD-dependent monooxygenase family. The cofactor is FAD.

The protein operates within mycotoxin biosynthesis. Its function is as follows. FAD-dependent monooxygenase; part of the satratoxin SC1 cluster involved in the biosynthesis of satratoxins, trichothecene mycotoxins that are associated with human food poisonings. Satratoxins are suggested to be made by products of multiple gene clusters (SC1, SC2 and SC3) that encode 21 proteins in all, including polyketide synthases, acetyltransferases, and other enzymes expected to modify the trichothecene skeleton. SC1 encodes 10 proteins, SAT1 to SAT10. The largest are SAT8, which encodes a putative polyketide synthase (PKS) with a conventional non-reducing architecture, and SAT10, a putative protein containing four ankyrin repeats and thus may be involved in protein scaffolding. The putative short-chain reductase SAT3 may assist the PKS in some capacity. SAT6 contains a secretory lipase domain and acts probably as a trichothecene esterase. SAT5 encodes a putative acetyltransferase, and so, with SAT6, may affect endogenous protection from toxicity. The probable transcription factor SAT9 may regulate the expression of the SC1 cluster. SC2 encodes proteins SAT11 to SAT16, the largest of which encodes the putative reducing PKS SAT13. SAT11 is a cytochrome P450 monooxygenase, while SAT14 and SAT16 are probable acetyltransferases. The SC2 cluster may be regulated by the transcription factor SAT15. SC3 is a small cluster that encodes 5 proteins, SAT17 to SAT21. SAT21 is a putative MFS-type transporter which may have a role in exporting secondary metabolites. The four other proteins putatively encoded in SC3 include the taurine hydroxylase-like protein SAT17, the O-methyltransferase SAT18, the acetyltransferase SAT19, and the Cys6-type zinc finger SAT20, the latter being probably involved in regulation of SC3 expression. The polypeptide is FAD-dependent monooxygenase SAT1 (Stachybotrys chartarum (strain CBS 109288 / IBT 7711) (Toxic black mold)).